A 405-amino-acid chain; its full sequence is Insertion element IS110 uncharacterized 43.6 kDa protein (405 aa).

The chain is Insertion element IS110 uncharacterized 43.6 kDa protein from Streptomyces coelicolor (strain ATCC BAA-471 / A3(2) / M145).